The following is a 287-amino-acid chain: Troponin T, cardiac muscle (287 aa).

2 stretches are compositionally biased toward acidic residues: residues methionine 1 to glycine 31 and glutamate 44 to valine 59. 2 disordered regions span residues methionine 1 to valine 85 and lysine 124 to lysine 208. Serine 2 is modified (N-acetylserine). At serine 2 the chain carries Phosphoserine; by CK2. Positions alanine 66–isoleucine 79 are enriched in pro residues. Composition is skewed to basic and acidic residues over residues lysine 124 to arginine 173 and glutamine 192 to lysine 208. Serine 197 is modified (phosphoserine; by PKC/PRKCA). Threonine 202 bears the Phosphothreonine; by PKC/PRKCA and RAF1 mark. Threonine 283 carries the post-translational modification Phosphothreonine; by PKC/PRKCA.

It belongs to the troponin T family. Phosphorylation at Thr-202 by PRKCA induces significant reduction in myofilament calcium sensitivity and actomyosin ATPase activity.

Troponin T is the tropomyosin-binding subunit of troponin, the thin filament regulatory complex which confers calcium-sensitivity to striated muscle actomyosin ATPase activity. In Ovis aries (Sheep), this protein is Troponin T, cardiac muscle (TNNT2).